The primary structure comprises 479 residues: ATP synthase subunit beta (479 aa).

153–160 is a binding site for ATP; sequence GGAGVGKT.

Belongs to the ATPase alpha/beta chains family. F-type ATPases have 2 components, CF(1) - the catalytic core - and CF(0) - the membrane proton channel. CF(1) has five subunits: alpha(3), beta(3), gamma(1), delta(1), epsilon(1). CF(0) has three main subunits: a(1), b(2) and c(9-12). The alpha and beta chains form an alternating ring which encloses part of the gamma chain. CF(1) is attached to CF(0) by a central stalk formed by the gamma and epsilon chains, while a peripheral stalk is formed by the delta and b chains.

It localises to the cell membrane. It carries out the reaction ATP + H2O + 4 H(+)(in) = ADP + phosphate + 5 H(+)(out). Increases 2-fold following exposure to low pH. Functionally, produces ATP from ADP in the presence of a proton gradient across the membrane. The catalytic sites are hosted primarily by the beta subunits. This chain is ATP synthase subunit beta, found in Lactobacillus acidophilus (strain ATCC 700396 / NCK56 / N2 / NCFM).